A 381-amino-acid polypeptide reads, in one-letter code: L-lactate dehydrogenase (381 aa).

An FMN hydroxy acid dehydrogenase domain is found at 1-380 (MIISASTDYR…SADSLVRELG (380 aa)). Residue Y24 coordinates substrate. Positions 106 and 127 each coordinate FMN. A substrate-binding site is contributed by Y129. T155 provides a ligand contact to FMN. R164 serves as a coordination point for substrate. Position 251 (K251) interacts with FMN. H275 serves as the catalytic Proton acceptor. Position 278 (R278) interacts with substrate. Residue 306-330 (DSGIRTGLDVVRMIALGADSVLLGR) participates in FMN binding.

The protein belongs to the FMN-dependent alpha-hydroxy acid dehydrogenase family. Homotetramer. FMN is required as a cofactor.

Its subcellular location is the cell inner membrane. It catalyses the reaction (S)-lactate + A = pyruvate + AH2. Functionally, catalyzes the conversion of L-lactate to pyruvate. Is coupled to the respiratory chain. The chain is L-lactate dehydrogenase from Pseudomonas paraeruginosa (strain DSM 24068 / PA7) (Pseudomonas aeruginosa (strain PA7)).